The sequence spans 98 residues: Co-chaperonin GroES (98 aa).

It belongs to the GroES chaperonin family. As to quaternary structure, heptamer of 7 subunits arranged in a ring. Interacts with the chaperonin GroEL.

The protein localises to the cytoplasm. Its function is as follows. Together with the chaperonin GroEL, plays an essential role in assisting protein folding. The GroEL-GroES system forms a nano-cage that allows encapsulation of the non-native substrate proteins and provides a physical environment optimized to promote and accelerate protein folding. GroES binds to the apical surface of the GroEL ring, thereby capping the opening of the GroEL channel. The sequence is that of Co-chaperonin GroES from Beutenbergia cavernae (strain ATCC BAA-8 / DSM 12333 / CCUG 43141 / JCM 11478 / NBRC 16432 / NCIMB 13614 / HKI 0122).